The primary structure comprises 148 residues: MGDFDGEQKELIKKLVNFRMIDGKRTRVRAIVYKTFHRLARTERDVIKLMVDAVDNIKPICEVVKVGVAGTIYDVPGIVARDRQQTLAIRWILGAAFKRRISYRISLEKCSFAEILDAYRKRGISRKRRENLHGLASTNRSFAHFRWW.

Belongs to the universal ribosomal protein uS7 family. Part of the small ribosomal subunit.

The protein resides in the mitochondrion. In terms of biological role, one of the primary rRNA binding proteins, it binds directly to 18S rRNA where it nucleates assembly of the head domain of the small subunit. This Triticum aestivum (Wheat) protein is Small ribosomal subunit protein uS7m (RPS7).